A 314-amino-acid polypeptide reads, in one-letter code: Transcriptional regulatory protein GlnL (314 aa).

The Response regulatory domain maps to R2 to K118. D54 bears the 4-aspartylphosphate mark.

In terms of processing, phosphorylated by GlnK.

It is found in the cytoplasm. Functionally, member of the two-component regulatory system GlnL/GlnK that positively regulates the expression of the glsA-glnT operon in response to glutamine. GlnL binds the promoter region of glsA-glnT in vitro. This is Transcriptional regulatory protein GlnL (glnL) from Bacillus subtilis (strain 168).